The chain runs to 275 residues: tRNA uridine(34) hydroxylase (275 aa).

Residues 121-214 (SQPDVLVIDT…YLEKTYNKNG (94 aa)) enclose the Rhodanese domain. Cys-174 (cysteine persulfide intermediate) is an active-site residue.

The protein belongs to the TrhO family.

It catalyses the reaction uridine(34) in tRNA + AH2 + O2 = 5-hydroxyuridine(34) in tRNA + A + H2O. Its function is as follows. Catalyzes oxygen-dependent 5-hydroxyuridine (ho5U) modification at position 34 in tRNAs. The chain is tRNA uridine(34) hydroxylase from Wolbachia pipientis wMel.